Here is a 436-residue protein sequence, read N- to C-terminus: MYDIKWIRDNSALFDQGRERRGLPKLSAELLALDDARRAAIAESQAAQERRNAASKEIGAAMKAKDNARAEALKAEMAELKAVSPALEEAERLAIAALDRALAEIPNLPLEDVPFGRDENDNPELRVVGEKPVFSFVPKEHFDIGEGLGLMDFEAAAKLSGARFVVNKGPLARLERALGQFMLDLHTGEHGYTEVNPPILARDDALFGTAQLPKLEEDMFAAHAGRVPQEAAGDLYWLIPTSEVVLTNLVRETILDEKQLPLRFTACTPCFRAEAGSAGRDTRGMIRQHQFTKTELVSITTPEEALVEHERMLTCAEEVLKRLGLAYRVVTLCTGDMGFASQKTYDIEVWLPGQGRYREISSCSVCGDFQARRMNARYRPEGGKTTRFVHTLNGSGVAVGRALVAVLENYQREDGGVNVPRALLPYMGGITTITRG.

Position 241–243 (241–243) interacts with L-serine; the sequence is TSE. 272 to 274 contacts ATP; the sequence is RAE. L-serine is bound at residue Glu-295. 359–362 contacts ATP; it reads EISS. Residue Ser-395 participates in L-serine binding.

This sequence belongs to the class-II aminoacyl-tRNA synthetase family. Type-1 seryl-tRNA synthetase subfamily. As to quaternary structure, homodimer. The tRNA molecule binds across the dimer.

The protein localises to the cytoplasm. The catalysed reaction is tRNA(Ser) + L-serine + ATP = L-seryl-tRNA(Ser) + AMP + diphosphate + H(+). It carries out the reaction tRNA(Sec) + L-serine + ATP = L-seryl-tRNA(Sec) + AMP + diphosphate + H(+). It functions in the pathway aminoacyl-tRNA biosynthesis; selenocysteinyl-tRNA(Sec) biosynthesis; L-seryl-tRNA(Sec) from L-serine and tRNA(Sec): step 1/1. Functionally, catalyzes the attachment of serine to tRNA(Ser). Is also able to aminoacylate tRNA(Sec) with serine, to form the misacylated tRNA L-seryl-tRNA(Sec), which will be further converted into selenocysteinyl-tRNA(Sec). This is Serine--tRNA ligase from Beijerinckia indica subsp. indica (strain ATCC 9039 / DSM 1715 / NCIMB 8712).